The chain runs to 139 residues: Non-structural protein 1 (139 aa).

The DLNP; interaction with MAP1B signature appears at 136–139 (DLNS).

This sequence belongs to the pneumovirus non-structural protein 1 family. As to quaternary structure, monomer. Homomultimer. Heteromultimer with NS2. Interacts with the matrix protein M. Interacts with host ELOC and CUL2; this interaction allows NS1 to form an active E3 ligase with ELOC and CUL2. Interacts with host IRF3; this interaction leads to the disrupted association of IRF3 with CREBBP and thus reduced binding of IRF3 to the IFN-beta promoter. Interacts with host MAVS; this interaction prevents MAVS binding to RIGI and inhibits signaling pathway leading to interferon production. Interacts with host MAP1B/microtubule-associated protein 1B. Interacts with host TRIM25 (via SPRY domain); this interaction suppresses RIGI ubiquitination and results in decreased interaction between RIGI and MAVS.

The protein localises to the host cytoplasm. Its subcellular location is the host mitochondrion. It localises to the host nucleus. Functionally, plays a major role in antagonizing the type I IFN-mediated antiviral response by degrading or inhibiting multiple cellular factors required for either IFN induction or response pathways. Acts cooperatively with NS2 to repress activation and nuclear translocation of host IFN-regulatory factor IRF3. Also disrupts the association of IRF3 with CREBBP. Interacts with host mitochondrial-associated membrane (MAM) MAVS and prevents the interaction with RIGI. Interacts with TRIM25 to suppress TRIM25-mediated RIGI ubiquitination and thereby RIGI-MAVS interaction. Together with NS2, participates in the proteasomal degradation of host STAT2, IRF3, IRF7, TBK1 and RIGI through a NS-degradasome involving CUL2 and Elongin-C. The degradasome requires an intact mitochondrial MAVS. Decreases the levels of host TRAF3 and IKBKE/IKK-epsilon. As functions other than disruptions of the type I IFN-mediated antiviral signaling pathways, induces host SOCS1 and SOCS3 expression. Suppresses premature apoptosis by an NF-kappa-B-dependent, interferon-independent mechanism and thus facilitates virus growth. Additionally, NS1 may serve some inhibitory role in viral transcription and RNA replication. Suppresses proliferation and activation of host CD103+ CD8+ cytotoxic T-lymphocytes and Th17 helper T-lymphocytes. In Human respiratory syncytial virus B (strain 18537), this protein is Non-structural protein 1 (1C).